The primary structure comprises 598 residues: Elongation factor 4 (598 aa).

A tr-type G domain is found at 4 to 186; it reads INIRNFAIIA…AIVSRLPAPS (183 aa). Residues 16 to 21 and 133 to 136 contribute to the GTP site; these read DHGKST and NKID.

This sequence belongs to the TRAFAC class translation factor GTPase superfamily. Classic translation factor GTPase family. LepA subfamily.

The protein resides in the cell inner membrane. It carries out the reaction GTP + H2O = GDP + phosphate + H(+). Required for accurate and efficient protein synthesis under certain stress conditions. May act as a fidelity factor of the translation reaction, by catalyzing a one-codon backward translocation of tRNAs on improperly translocated ribosomes. Back-translocation proceeds from a post-translocation (POST) complex to a pre-translocation (PRE) complex, thus giving elongation factor G a second chance to translocate the tRNAs correctly. Binds to ribosomes in a GTP-dependent manner. In Ehrlichia ruminantium (strain Welgevonden), this protein is Elongation factor 4.